Reading from the N-terminus, the 601-residue chain is Protein FREE1 (601 aa).

A disordered region spans residues 1–240 (MQQGDYNSYY…SGEYPAFEDS (240 aa)). Pro residues predominate over residues 21 to 35 (TPNPNPNPNPSPPAP). 2 stretches are compositionally biased toward polar residues: residues 63–79 (DYSNYSQNYTPYGQNSE) and 125–155 (LSSYGSFDSTAPYQQPTSQHMYYSPYDQHQT). A compositionally biased stretch (pro residues) spans 161–175 (APPPSSAPAPNPNPA). Residues 176 to 197 (PYSSSLYSAPPYSSGGSSIPPS) are compositionally biased toward low complexity. Residues 214–231 (NRSRSDLGSDLYGKRSDS) show a composition bias toward basic and acidic residues. Ser-218 is subject to Phosphoserine. Residues 338-344 (LDGLRML) are nuclear export signal. An FYVE-type zinc finger spans residues 455-515 (DEAVSKCTSC…VCDRCMAEVS (61 aa)). Residues Cys-461, Cys-464, Cys-477, Cys-480, Cys-485, Cys-488, Cys-507, and Cys-510 each coordinate Zn(2+). The stretch at 527 to 552 (RNVSLQSHEDLARKLQEEMERNRKSS) forms a coiled coil. Phosphoserine occurs at positions 530 and 533. Positions 542–561 (QEEMERNRKSSSGLREGSGR) are disordered.

Part of the ESCRT-I complex. Interacts with VPS23A and VPS23B, but not with VPS28 or VPS37. Interacts with IRT1. Interacts with SH3P2. Interacts with SH3P3, but not with SH3P1. Interacts (via N-terminus) with PYL4 and PYR3. Interacts (via C-terminus) with SNRK2D/SNRK2.2, SNRK2I/SNRK2.3, ABF4 and ABI5. Interacts with SINAT1, SINAT2, SINAT3 and SINAT4. Interacts with SINAT5. Component of a phosphoinositide 3-kinase (PI3K) complex containing ATG6, SH3P2 and FREE1. Phosphorylated at Ser-530 and Ser-533 by SNRK2D/SNRK2.2 and SNRK2I/SNRK2.3 in response to abscisic acid (ABA). Phosphorylation is necessary for ABA-induced FREE1 nuclear import. Post-translationally, ubiquitinated by SINAT1, SINAT2, SINAT3 and SINAT4 for subsequent proteasomal degradation. As to expression, ubiquitous. Lowest expression in mature seeds.

Its subcellular location is the cytoplasm. The protein resides in the prevacuolar compartment membrane. It localises to the late endosome. The protein localises to the endosome. It is found in the multivesicular body. Its subcellular location is the nucleus. Functionally, endosomal sorting complex required for transport (ESCRT) component regulating multivesicular body (MVB) protein sorting and plant growth. Required for the formation of intra-luminal vesicles (ILVs)in MVBs. Binds to phosphatidylinositol-3-phosphate (PI3P) and ubiquitin. Controls IRT1 recycling to the plasma membrane and impacts the polar delivery of this transporter to the outer plasma membrane domain. Regulates ubiquitin-dependent membrane protein degradation, vacuolar transport, autophagy, and vacuole biogenesis. ESCRT component that binds ubiquitin and regulates vacuolar sorting of proteins. Attenuates abscisic acid (ABA) signaling through RSL1-triggered degradation of the ABA receptors PYR1 and PYL4. Interacts with PYL4 and PYR1, and delivers the ubiquitinated ABA receptors as cargo to the vacuolar degradation pathway. In response to ABA, is phosphorylated by SnRK2 kinases which mediate FREE1 nuclear import. In the nucleus, interacts with the ABA-responsive transcription factors ABF4 and ABI5 to reduce their ability to bind to their cis-regulatory sequences of downstream genes, thus leading to transcriptional inhibition of ABA signaling pathway. Negatively regulates salt stress tolerance via a negative feedback loop involving ABA signaling pathway. The polypeptide is Protein FREE1 (Arabidopsis thaliana (Mouse-ear cress)).